Consider the following 150-residue polypeptide: Arginine repressor (150 aa).

This sequence belongs to the ArgR family.

The protein resides in the cytoplasm. The protein operates within amino-acid biosynthesis; L-arginine biosynthesis [regulation]. Regulates arginine biosynthesis genes. This Thermoanaerobacter sp. (strain X514) protein is Arginine repressor.